Here is a 105-residue protein sequence, read N- to C-terminus: Unclassified hydrophobin D (105 aa).

The N-terminal stretch at 1–18 is a signal peptide; it reads MKFYIVLLALAAFAMAEA. Cystine bridges form between C35-C86, C42-C83, and C43-C49.

The protein resides in the secreted. The protein localises to the cell wall. In terms of biological role, aerial growth, conidiation, and dispersal of filamentous fungi in the environment rely upon a capability of their secreting small amphipathic proteins called hydrophobins (HPBs) with low sequence identity. Class I can self-assemble into an outermost layer of rodlet bundles on aerial cell surfaces, conferring cellular hydrophobicity that supports fungal growth, development and dispersal; whereas Class II form highly ordered films at water-air interfaces through intermolecular interactions but contribute nothing to the rodlet structure. In P.expansum, hydrophobins contribute to germination, tolerance to cold stress and mycotoxins patulin and citrinin production. This Penicillium expansum (Blue mold rot fungus) protein is Unclassified hydrophobin D.